Here is a 312-residue protein sequence, read N- to C-terminus: Apolipoprotein E (312 aa).

The N-terminal stretch at 1–18 (MKALWAVLLVTLLAGCLA) is a signal peptide. Repeat copies occupy residues 72–93 (VLME…EQLG), 94–115 (PVAE…ARLG), 116–137 (ADME…TMLG), 138–159 (QSTE…KRLM), 160–181 (RDAE…EGAE), 182–203 (RGVS…QRTA), 204–225 (NLGA…DRIR), and 226–247 (GRLE…EHME). Residues 72–247 (VLMEDTMTEV…RLEEVREHME (176 aa)) form an 8 X 22 AA approximate tandem repeats region. Position 135 is a methionine sulfoxide (Met-135). Ser-139 carries the phosphoserine modification. The tract at residues 150-160 (HLRKMRKRLMR) is LDL and other lipoprotein receptors binding. 154 to 157 (MRKR) serves as a coordination point for heparin. Residues 202-282 (TANLGAGAAQ…GWFEPIVEDM (81 aa)) are lipid-binding and lipoprotein association. Residue 221 to 228 (GDRIRGRL) participates in heparin binding. The homooligomerization stretch occupies residues 258-312 (QQIRLQAEIFQARLKGWFEPIVEDMHRQWANLMEKIQASVATNPIISTPMPQENQ). Residues 270-282 (RLKGWFEPIVEDM) form a specificity for association with VLDL region.

Belongs to the apolipoprotein A1/A4/E family. As to quaternary structure, homotetramer. May interact with ABCA1; functionally associated with ABCA1 in the biogenesis of HDLs. May interact with APP/A4 amyloid-beta peptide; the interaction is extremely stable in vitro but its physiological significance is unclear. May interact with MAPT. May interact with MAP2. In the cerebrospinal fluid, interacts with secreted SORL1. Interacts with PMEL; this allows the loading of PMEL luminal fragment on ILVs to induce fibril nucleation. In terms of processing, APOE exists as multiple glycosylated and sialylated glycoforms within cells and in plasma. The extent of glycosylation and sialylation are tissue and context specific. Post-translationally, glycated in plasma VLDL. Phosphorylated by FAM20C in the extracellular medium.

It localises to the secreted. The protein resides in the extracellular space. The protein localises to the extracellular matrix. It is found in the extracellular vesicle. Its subcellular location is the endosome. It localises to the multivesicular body. APOE is an apolipoprotein, a protein associating with lipid particles, that mainly functions in lipoprotein-mediated lipid transport between organs via the plasma and interstitial fluids. APOE is a core component of plasma lipoproteins and is involved in their production, conversion and clearance. Apolipoproteins are amphipathic molecules that interact both with lipids of the lipoprotein particle core and the aqueous environment of the plasma. As such, APOE associates with chylomicrons, chylomicron remnants, very low density lipoproteins (VLDL) and intermediate density lipoproteins (IDL) but shows a preferential binding to high-density lipoproteins (HDL). It also binds a wide range of cellular receptors including the LDL receptor/LDLR, the LDL receptor-related proteins LRP1, LRP2 and LRP8 and the very low-density lipoprotein receptor/VLDLR that mediate the cellular uptake of the APOE-containing lipoprotein particles. Finally, APOE also has a heparin-binding activity and binds heparan-sulfate proteoglycans on the surface of cells, a property that supports the capture and the receptor-mediated uptake of APOE-containing lipoproteins by cells. A main function of APOE is to mediate lipoprotein clearance through the uptake of chylomicrons, VLDLs, and HDLs by hepatocytes. APOE is also involved in the biosynthesis by the liver of VLDLs as well as their uptake by peripheral tissues ensuring the delivery of triglycerides and energy storage in muscle, heart and adipose tissues. By participating in the lipoprotein-mediated distribution of lipids among tissues, APOE plays a critical role in plasma and tissues lipid homeostasis. APOE is also involved in two steps of reverse cholesterol transport, the HDLs-mediated transport of cholesterol from peripheral tissues to the liver, and thereby plays an important role in cholesterol homeostasis. First, it is functionally associated with ABCA1 in the biogenesis of HDLs in tissues. Second, it is enriched in circulating HDLs and mediates their uptake by hepatocytes. APOE also plays an important role in lipid transport in the central nervous system, regulating neuron survival and sprouting. The protein is Apolipoprotein E (Apoe) of Mus pahari (Gairdner's shrew-mouse).